Reading from the N-terminus, the 32-residue chain is Snaclec (32 aa).

As to quaternary structure, dimer; disulfide-linked. As to expression, expressed by the venom gland.

It localises to the secreted. Interferes with one step of hemostasis (modulation of platelet aggregation, or coagulation cascade, for example). The polypeptide is Snaclec (Bothrops diporus (Chaco lancehead)).